Reading from the N-terminus, the 423-residue chain is tRNA(Ile2) 2-agmatinylcytidine synthetase TiaS (423 aa).

Residues 273 to 347 constitute a DNA-binding region (OB); it reads VIVYGRVVEE…GINIEKIKIL (75 aa).

It belongs to the TiaS family.

The protein resides in the cytoplasm. The catalysed reaction is cytidine(34) in tRNA(Ile2) + agmatine + ATP + H2O = 2-agmatinylcytidine(34) in tRNA(Ile2) + AMP + 2 phosphate + 2 H(+). ATP-dependent agmatine transferase that catalyzes the formation of 2-agmatinylcytidine (agm2C) at the wobble position (C34) of tRNA(Ile2), converting the codon specificity from AUG to AUA. This is tRNA(Ile2) 2-agmatinylcytidine synthetase TiaS from Methanocaldococcus jannaschii (strain ATCC 43067 / DSM 2661 / JAL-1 / JCM 10045 / NBRC 100440) (Methanococcus jannaschii).